The sequence spans 594 residues: Arginine--tRNA ligase (594 aa).

The 'HIGH' region motif lies at 139 to 149; the sequence is ANPTGPLHVGH.

This sequence belongs to the class-I aminoacyl-tRNA synthetase family. Monomer.

Its subcellular location is the cytoplasm. The enzyme catalyses tRNA(Arg) + L-arginine + ATP = L-arginyl-tRNA(Arg) + AMP + diphosphate. The polypeptide is Arginine--tRNA ligase (Burkholderia thailandensis (strain ATCC 700388 / DSM 13276 / CCUG 48851 / CIP 106301 / E264)).